Here is a 275-residue protein sequence, read N- to C-terminus: Large ribosomal subunit protein uL2 (275 aa).

The tract at residues 224–275 (AMNPVDHPHGGGEAKAGQGNPHPVTPWGVPTKGYKTRKNKRTQQFIVRDRRG) is disordered.

The protein belongs to the universal ribosomal protein uL2 family. In terms of assembly, part of the 50S ribosomal subunit. Forms a bridge to the 30S subunit in the 70S ribosome.

Its function is as follows. One of the primary rRNA binding proteins. Required for association of the 30S and 50S subunits to form the 70S ribosome, for tRNA binding and peptide bond formation. It has been suggested to have peptidyltransferase activity; this is somewhat controversial. Makes several contacts with the 16S rRNA in the 70S ribosome. In Xanthomonas axonopodis pv. citri (strain 306), this protein is Large ribosomal subunit protein uL2.